Here is a 96-residue protein sequence, read N- to C-terminus: Citrate lyase acyl carrier protein (96 aa).

Ser-14 is modified (O-(phosphoribosyl dephospho-coenzyme A)serine).

This sequence belongs to the CitD family. As to quaternary structure, oligomer with a subunit composition of (alpha,beta,gamma)6.

It is found in the cytoplasm. Its function is as follows. Covalent carrier of the coenzyme of citrate lyase. The chain is Citrate lyase acyl carrier protein from Lactococcus lactis subsp. lactis (strain IL1403) (Streptococcus lactis).